The sequence spans 378 residues: Ubiquitin-conjugating enzyme E2 Q2 (378 aa).

The tract at residues 126–152 (DQPLPTGQNGTTEEVTSEEEEEEEMAE) is disordered. The segment covering 140 to 152 (VTSEEEEEEEMAE) has biased composition (acidic residues). Positions 207 to 371 (QASDRLMKEL…VQIHEKNGWY (165 aa)) constitute a UBC core domain. The Glycyl thioester intermediate role is filled by C307.

It belongs to the ubiquitin-conjugating enzyme family. Auto-ubiquitinated in vitro.

The protein resides in the cytoplasm. It carries out the reaction S-ubiquitinyl-[E1 ubiquitin-activating enzyme]-L-cysteine + [E2 ubiquitin-conjugating enzyme]-L-cysteine = [E1 ubiquitin-activating enzyme]-L-cysteine + S-ubiquitinyl-[E2 ubiquitin-conjugating enzyme]-L-cysteine.. It participates in protein modification; protein ubiquitination. In terms of biological role, accepts ubiquitin from the E1 complex and catalyzes its covalent attachment to other proteins. In vitro catalyzes 'Lys-48'-linked polyubiquitination. The polypeptide is Ubiquitin-conjugating enzyme E2 Q2 (Ube2q2) (Mus musculus (Mouse)).